An 87-amino-acid chain; its full sequence is DNA-directed RNA polymerase subunit omega (87 aa).

The protein belongs to the RNA polymerase subunit omega family. In terms of assembly, the RNAP catalytic core consists of 2 alpha, 1 beta, 1 beta' and 1 omega subunit. When a sigma factor is associated with the core the holoenzyme is formed, which can initiate transcription.

It carries out the reaction RNA(n) + a ribonucleoside 5'-triphosphate = RNA(n+1) + diphosphate. Functionally, promotes RNA polymerase assembly. Latches the N- and C-terminal regions of the beta' subunit thereby facilitating its interaction with the beta and alpha subunits. The sequence is that of DNA-directed RNA polymerase subunit omega from Pseudomonas fluorescens (strain SBW25).